Here is a 638-residue protein sequence, read N- to C-terminus: Phosphomethylpyrimidine synthase (638 aa).

Residues N235, M264, Y293, H329, 349–351 (SRG), 390–393 (DGLR), and E429 contribute to the substrate site. Residue H433 participates in Zn(2+) binding. Y456 provides a ligand contact to substrate. H497 serves as a coordination point for Zn(2+). 3 residues coordinate [4Fe-4S] cluster: C577, C580, and C585.

It belongs to the ThiC family. As to quaternary structure, homodimer. [4Fe-4S] cluster serves as cofactor.

It carries out the reaction 5-amino-1-(5-phospho-beta-D-ribosyl)imidazole + S-adenosyl-L-methionine = 4-amino-2-methyl-5-(phosphooxymethyl)pyrimidine + CO + 5'-deoxyadenosine + formate + L-methionine + 3 H(+). The protein operates within cofactor biosynthesis; thiamine diphosphate biosynthesis. Catalyzes the synthesis of the hydroxymethylpyrimidine phosphate (HMP-P) moiety of thiamine from aminoimidazole ribotide (AIR) in a radical S-adenosyl-L-methionine (SAM)-dependent reaction. This Polaromonas naphthalenivorans (strain CJ2) protein is Phosphomethylpyrimidine synthase.